Reading from the N-terminus, the 510-residue chain is GTPase Der (510 aa).

EngA-type G domains lie at 3-166 (PVVA…ATAL) and 220-393 (IKIA…ACAT). Residues 9-16 (GRPNVGKS), 56-60 (DTGGI), 118-121 (NKTD), 226-233 (GRPNVGKS), 273-277 (DTAGV), and 338-341 (NKWD) contribute to the GTP site. The KH-like domain occupies 394 to 478 (QKTSTSMLTR…PIRIQFQEGN (85 aa)).

The protein belongs to the TRAFAC class TrmE-Era-EngA-EngB-Septin-like GTPase superfamily. EngA (Der) GTPase family. Associates with the 50S ribosomal subunit.

In terms of biological role, GTPase that plays an essential role in the late steps of ribosome biogenesis. This chain is GTPase Der, found in Haemophilus ducreyi (strain 35000HP / ATCC 700724).